We begin with the raw amino-acid sequence, 229 residues long: Enolase-phosphatase E1 (229 aa).

It belongs to the HAD-like hydrolase superfamily. MasA/MtnC family. In terms of assembly, monomer. Mg(2+) serves as cofactor.

The catalysed reaction is 5-methylsulfanyl-2,3-dioxopentyl phosphate + H2O = 1,2-dihydroxy-5-(methylsulfanyl)pent-1-en-3-one + phosphate. The protein operates within amino-acid biosynthesis; L-methionine biosynthesis via salvage pathway; L-methionine from S-methyl-5-thio-alpha-D-ribose 1-phosphate: step 3/6. It participates in amino-acid biosynthesis; L-methionine biosynthesis via salvage pathway; L-methionine from S-methyl-5-thio-alpha-D-ribose 1-phosphate: step 4/6. In terms of biological role, bifunctional enzyme that catalyzes the enolization of 2,3-diketo-5-methylthiopentyl-1-phosphate (DK-MTP-1-P) into the intermediate 2-hydroxy-3-keto-5-methylthiopentenyl-1-phosphate (HK-MTPenyl-1-P), which is then dephosphorylated to form the acireductone 1,2-dihydroxy-3-keto-5-methylthiopentene (DHK-MTPene). This chain is Enolase-phosphatase E1, found in Enterobacter sp. (strain 638).